The primary structure comprises 120 residues: uncharacterized protein (120 aa).

A helical membrane pass occupies residues 19–41; the sequence is YPELFITWCVMTYTFGVAGYMLG. Residues 57–78 are disordered; the sequence is SKNAHPWEDTKSSSGKSDESLD. The span at 61 to 75 shows a compositional bias: basic and acidic residues; that stretch reads HPWEDTKSSSGKSDE.

Its subcellular location is the membrane. This is an uncharacterized protein from Schizosaccharomyces pombe (strain 972 / ATCC 24843) (Fission yeast).